The sequence spans 387 residues: F-box only protein 4 (387 aa).

A phosphoserine mark is found at S12 and S48. Residues 56 to 102 (ASTLTRLPIDVQLYILSFLSPHDLCQLGSTNHYWNETVRDPILWRYF) form the F-box domain.

In terms of assembly, homodimer. Part of the SCF (SKP1-CUL1-F-box) E3 ubiquitin-protein ligase complex SCF(FBXO4) formed of CUL1, SKP1, RBX1 and FBXO4. Interacts with TERF1; this interaction is prevented in the presence of GNL3L. Identified in a complex with CRYAB and CCND1. Phosphorylation at Ser-12 varies during the cell cycle. It is low in resting cells and high in the S phase and the G2/M phase of the cell cycle. Phosphorylation is decreased during late G1 phase. Phosphorylation at Ser-12 promotes homodimerization and is necessary for optimal ubiquitin ligase activity towards CCND1.

Its subcellular location is the cytoplasm. The protein operates within protein modification; protein ubiquitination. In terms of biological role, substrate recognition component of a SCF (SKP1-CUL1-F-box protein) E3 ubiquitin-protein ligase complex that mediates the ubiquitination and subsequent proteasomal degradation of target proteins. Promotes ubiquitination of cyclin-D1 (CCND1) and its subsequent proteasomal degradation. However, it does not act as a major regulator of CCND1 stability during the G1/S transition. Recognizes TERF1 and promotes its ubiquitination together with UBE2D1. Promotes ubiquitination of FXR1 following phosphorylation of FXR1 by GSK3B, leading to FXR1 degradation by the proteasome. The protein is F-box only protein 4 (FBXO4) of Homo sapiens (Human).